The primary structure comprises 310 residues: Calbindin-32 (310 aa).

EF-hand domains are found at residues 35–70, 84–120, 131–166, 177–212, 224–259, and 283–304; these read LSANQFMDVWAHYDKDGNGYIEGTELDGFLREFVSS, TMLEELKSCFMEAYDDNQDGKIDIRELAQLLPMEENF, ESSVEFMKIWREYDTDNSGYIEADELKNFLRDLLKE, KLIEYTDTMLQVFDANKDGRLQLSEMAKLLPVKENF, LTKEDIEKVFSLYDRDNSGTIENEELKGFLKDLLEL, and TDKHGKISRKELTMILLTLAKI. Residues Asp48, Asp50, Asn52, Tyr54, Glu59, Asp98, Asn100, Asp102, Lys104, Glu109, Asp144, Asp146, Ser148, Tyr150, Glu155, Asp190, Asn192, Asp194, Arg196, Glu201, Asp237, Asp239, Ser241, Thr243, and Glu248 each contribute to the Ca(2+) site.

Belongs to the calbindin family. As to expression, expressed in a large number of neuron of the brain and the thoracic ganglion as well as in two small muscles of the thorax.

The sequence is that of Calbindin-32 (Cbp53E) from Drosophila melanogaster (Fruit fly).